The following is a 461-amino-acid chain: L-serine dehydratase (461 aa).

It belongs to the iron-sulfur dependent L-serine dehydratase family. [4Fe-4S] cluster is required as a cofactor.

The enzyme catalyses L-serine = pyruvate + NH4(+). The protein operates within carbohydrate biosynthesis; gluconeogenesis. In Mycobacterium bovis (strain ATCC BAA-935 / AF2122/97), this protein is L-serine dehydratase (sdaA).